An 819-amino-acid chain; its full sequence is MDIQLDPARDDLPLMANTSHILVKHYVLDLDVDFESQVIEGTIVLFLEDGNRFKKQNSSIEEACQSESNKACKFGMPEPCHIPVTNARTFSSEMEYNDFAICSKGEKDTSDKDGNHDNQEHASGISSSKYCCDTGNHGSEDFLLVLDCCDLSVLKVEEVDVAAVPGLEKFTRSPELTVVSEEFRNQIVRELVTLPANRWREQLDYYARCSQAPGCGELLFDTDTWSLQIRKTGAQTATDFPHAIRIWYKTKPEGRSVTWTSDQSGRPCVYTVGSPINNRALFPCQEPPVAMSTWQATVRAAASFVVLMSGENSAKPTQLWEECSSWYYYVTMPMPASTFTIAVGCWTEMKMETWSSNDLATERPFSPSEANFRHVGVCSHMEYPCRFQNASATTQEIIPHRVFAPVCLTGACQETLLRLIPPCLSAAHSVLGAHPFSRLDVLIVPANFPSLGMASPHIMFLSQSILTGGNHLCGTRLCHEIAHAWFGLAIGARDWTEEWLSEGFATHLEDVFWATAQQLAPYEAREQQELRACLRWRRLQDEMQCSPEEMQVLRPSKDKTGHTSDSGASVIKHGLNPEKIFMQVHYLKGYFLLRFLAKRLGDETYFSFLRKFVHTFHGQLILSQDFLQMLLENIPEEKRLELSVENIYQDWLESSGIPKPLQRERRAGAECGLARQVRAEVTKWIGVNRRPRKRKRREKEEVFEKLLPDQLVLLLEHLLEQKTLSPRTLQSLQRTYHLQDQDAEVRHRWCELIVKHKFTKAYKSVERFLQEDQAMGVYLYGELMVSEDARQQQLARRCFERTKEQMDRSSAQVVAEMLF.

His-479 lines the Zn(2+) pocket. Glu-480 functions as the Proton acceptor in the catalytic mechanism. His-483 and Glu-502 together coordinate Zn(2+). A Nucleolar localization signal motif is present at residues 689–699 (RRPRKRKRREK).

It belongs to the peptidase M1 family. It depends on Zn(2+) as a cofactor.

It localises to the nucleus. Its subcellular location is the nucleolus. It is found in the cytoplasm. Functionally, aminopeptidase which catalyzes the hydrolysis of amino acid residues from the N-terminus of peptide or protein substrates. This chain is Aminopeptidase O, found in Homo sapiens (Human).